The primary structure comprises 246 residues: ABC transporter ATP-binding protein NatA (246 aa).

One can recognise an ABC transporter domain in the interval 2 to 237 (ITLTDCSRRF…ERSEDLNYIF (236 aa)). An ATP-binding site is contributed by 38 to 45 (GENGAGKT).

It belongs to the ABC transporter superfamily. The complex is composed of NatA and NatB.

The enzyme catalyses Na(+)(in) + ATP + H2O = Na(+)(out) + ADP + phosphate + H(+). In terms of biological role, part of an ABC transporter that catalyzes ATP-dependent electrogenic sodium extrusion. The sequence is that of ABC transporter ATP-binding protein NatA from Bacillus subtilis (strain 168).